We begin with the raw amino-acid sequence, 507 residues long: RNA-binding protein Nova-1 (507 aa).

Positions 1–44 (MMAAAPIQQNGTHTGVPIDLDPPDSRKRPLEAPPEAGSTKRTNT) are disordered. The short motif at 27-43 (KRPLEAPPEAGSTKRTN) is the Bipartite nuclear localization signal element. The KH 1 domain maps to 49-116 (QYFLKVLIPS…EALNAVHGFI (68 aa)). The interval 139–171 (QTTVNPDRIKQTLPSSPTTTKSSPSDPMTTSRA) is disordered. Low complexity predominate over residues 150–169 (TLPSSPTTTKSSPSDPMTTS). A Phosphoserine modification is found at serine 154. KH domains are found at residues 171–237 (ANQV…VELI) and 421–488 (KDVV…QYLI). Positions 419–503 (GSKDVVEIAV…YEQGVRAANP (85 aa)) are required for RNA binding.

In terms of assembly, interacts with PTBP2; the interaction is direct. Expressed in neurons of the cortex, sub-cortex, cerebellum and brainstem (at protein level). Expressed in motor neurons, but not in glia.

The protein resides in the nucleus. Functionally, functions to regulate alternative splicing in neurons by binding pre-mRNA in a sequence-specific manner to activate exon inclusion or exclusion. It binds specifically to the sequences 5'-YCAY-3' and regulates splicing in only a subset of regulated exons. Binding to an exonic 5'-YCAY-3' cluster changes the protein complexes assembled on pre-mRNA, blocking U1 snRNP binding and exon inclusion, whereas binding to an intronic 5'-YCAY-3' cluster enhances spliceosome assembly and exon inclusion. Binding to 5'-YCAY-3' clusters results in a local and asymmetric action to regulate spliceosome assembly and alternative splicing in neurons. Binding to an exonic 5'-YCAY-3' cluster changed the protein complexes assembled on pre-mRNA, blocking U1 snRNP (small nuclear ribonucleoprotein) binding and exon inclusion, whereas binding to an intronic 5'-YCAY-3' cluster enhanced spliceosome assembly and exon inclusion. With NOVA1, they perform unique biological functions in different brain areas and cell types. Autoregulates its own expression by acting as a splicing repressor. Acts to activate the inclusion of exon E3A in the glycine receptor alpha-2 chain and of exon E9 in gamma-aminobutyric-acid receptor gamma-2 subunit via a distal downstream UCAU-rich intronic splicing enhancer. Acts to regulate a novel glycine receptor alpha-2 chain splice variant (alpha-2N) in developing spinal cord. The sequence is that of RNA-binding protein Nova-1 from Mus musculus (Mouse).